We begin with the raw amino-acid sequence, 304 residues long: RNA polymerase II holoenzyme cyclin-like subunit (304 aa).

The 132-residue stretch at 43–174 (TIHDSKANKQ…LIEELQSYLI (132 aa)) folds into the Cyclin N-terminal domain.

The protein belongs to the cyclin family. Cyclin C subfamily. As to quaternary structure, component of the SRB8-11 complex, a regulatory module of the Mediator complex.

Its subcellular location is the nucleus. Functionally, component of the SRB8-11 complex. The SRB8-11 complex is a regulatory module of the Mediator complex which is itself involved in regulation of basal and activated RNA polymerase II-dependent transcription. The SRB8-11 complex may be involved in the transcriptional repression of a subset of genes regulated by Mediator. It may inhibit the association of the Mediator complex with RNA polymerase II to form the holoenzyme complex. The SRB8-11 complex phosphorylates the C-terminal domain (CTD) of the largest subunit of RNA polymerase II. The protein is RNA polymerase II holoenzyme cyclin-like subunit (SSN8) of Kluyveromyces lactis (strain ATCC 8585 / CBS 2359 / DSM 70799 / NBRC 1267 / NRRL Y-1140 / WM37) (Yeast).